A 143-amino-acid chain; its full sequence is S-protein homolog 11 (143 aa).

A signal peptide spans 1–20 (MNCFSFSFIIIVLCAGSSNA).

The protein belongs to the plant self-incompatibility (S1) protein family.

The protein resides in the secreted. The sequence is that of S-protein homolog 11 from Arabidopsis thaliana (Mouse-ear cress).